A 282-amino-acid polypeptide reads, in one-letter code: 3-methyl-2-oxobutanoate hydroxymethyltransferase (282 aa).

Mg(2+) contacts are provided by D46 and D85. 3-methyl-2-oxobutanoate is bound by residues 46–47, D85, and K115; that span reads DS. E117 is a Mg(2+) binding site. E184 serves as the catalytic Proton acceptor.

It belongs to the PanB family. As to quaternary structure, homodecamer; pentamer of dimers. Requires Mg(2+) as cofactor.

It localises to the cytoplasm. The catalysed reaction is 3-methyl-2-oxobutanoate + (6R)-5,10-methylene-5,6,7,8-tetrahydrofolate + H2O = 2-dehydropantoate + (6S)-5,6,7,8-tetrahydrofolate. It participates in cofactor biosynthesis; (R)-pantothenate biosynthesis; (R)-pantoate from 3-methyl-2-oxobutanoate: step 1/2. Functionally, catalyzes the reversible reaction in which hydroxymethyl group from 5,10-methylenetetrahydrofolate is transferred onto alpha-ketoisovalerate to form ketopantoate. The polypeptide is 3-methyl-2-oxobutanoate hydroxymethyltransferase (Alkaliphilus metalliredigens (strain QYMF)).